The sequence spans 337 residues: Probable cytosolic iron-sulfur protein assembly protein 1 (337 aa).

WD repeat units lie at residues 11 to 50, 57 to 96, 109 to 148, 155 to 194, 199 to 240, 252 to 290, and 301 to 337; these read LHND…ENLL, VHKK…LEEG, GHEN…EEYE, EHSQ…WECA, GHEG…EDDQ, AHRS…SEVS, and AHTV…NYQD.

Belongs to the WD repeat CIA1 family. In terms of assembly, interacts with NAR1.

The protein resides in the cytoplasm. It localises to the nucleus. Its function is as follows. Essential component of the cytosolic iron-sulfur (Fe/S) protein assembly machinery. Required for the maturation of extramitochondrial Fe/S proteins. The sequence is that of Probable cytosolic iron-sulfur protein assembly protein 1 from Candida glabrata (strain ATCC 2001 / BCRC 20586 / JCM 3761 / NBRC 0622 / NRRL Y-65 / CBS 138) (Yeast).